The primary structure comprises 587 residues: Putative ankyrin repeat protein L66 (587 aa).

ANK repeat units follow at residues 77–106, 108–136, 137–166, 168–196, 199–228, 230–256, 259–288, 302–331, 333–360, 361–390, 392–418, 420–448, 449–478, 480–507, 509–537, and 539–567; these read DKNL…DIRI, NNYP…DVSD, YDNY…DVHC, DNAP…DVNY, NEDL…NIHF, DSLI…ILGN, NIRN…SIEN, FKKN…NVAF, DNLP…NVKI, NYEN…NVKD, TAIY…DLIK, HNEI…INKS, IYDK…DIKS, KFHD…KINN, YKNL…NMKC, and RIDT…KLIC.

This is Putative ankyrin repeat protein L66 from Acanthamoeba polyphaga mimivirus (APMV).